The sequence spans 245 residues: MGRAFEYRKAAKMKRWGTMSRVFPKLGKIITMAAKEGGLDPDMNPKLRTAILNAKAQNMPKDNIDAAIKRAAAKDAADIKEITYDVKAHYGVQMIVECATDNHTRTVANVKAILNRNGGEMLTSGSLNFMFTKKAVFVFDKTDDMDLEELELDLIDYGLEEIEEDVEPQENGNDKAIVRIYGEFTSFGELSKALEDKGIEVKKATIEYIANTPVELDEKQLEEIEALIDKLEDDEDVQNVFTNIN.

It belongs to the TACO1 family.

Its subcellular location is the cytoplasm. The sequence is that of Probable transcriptional regulatory protein SUN_1622 from Sulfurovum sp. (strain NBC37-1).